A 1827-amino-acid chain; its full sequence is MADERKDEAKAPHWTSAPLTEASAHSHPPEIKDQGGAGEGLVRSANGFPYREDEEGAFGEHGSQGTYSNTKENGINGELTSADRETAEEVSARIVQVVTAEAVAVLKGEQEKEAQHKDQTAALPLAAEETANLPPSPPPSPASEQTVTVEEDLLTASKMEFHDQQELTPSTAEPSDQKEKESEKQSKPGEDLKHAALVSQPETTKTYPDKKDMQGTEEEKAPLALFGHTLVASLEDMKQKTEPSLVVPGIDLPKEPPTPKEQKDWFIEMPTEAKKDEWGLVAPISPGPLTPMREKDVFDDIPKWEGKQFDSPMPSPFQGGSFTLPLDVMKNEIVTETSPFAPAFLQPDDKKSLQQTSGPATAKDSFKIEEPHEAKPDKMAEAPPSEAMTLPKDAHIPVVEEHVMGKVLEEEKEAINQETVQQRDTFTPSGQEPILTEKETELKLEEKTTISDKEAVPKESKPPKPADEEIGIIQTSTEHTFSEQKDQEPTTDMLKQDSFPVSLEQAVTDSAMTSKTLEKAMTEPSALIEKSSIQELFEMRVDDKDKIEGVGAATSAELDMPFYEDKSGMSKYFETSALKEEATKSIEPGSDYYELSDTRESVHESIDTMSPMHKNGDKEFQTGKESQPSPPAQEAGYSTLAQSYPSDLPEEPSSPQERMFTIDPKVYGEKRDLHSKNKDDLTLSRSLGLGGRSAIEQRSMSINLPMSCLDSIALGFNFGRGHDLSPLASDILTNTSGSMDEGDDYLPATTPALEKAPCFPVESKEEEQIEKVKATGEESTQAEISCESPFLAKDFYKNGTVMAPDLPEMLDLAGTRSRLASVSADAEVARRKSVPSETVVEDSRTGLPPVTDENHVIVKTDSQLEDLGYCVFNKYTVPLPSPVQDSENLSGESGTFYEGTDDKVRRDLATDLSLIEVKLAAAGRVKDEFSVDKEASAHISGDKSGLSKEFDQEKKANDRLDTVLEKSEEHADSKEHAKKTEEAGDEIETFGLGVTYEQALAKDLSIPTDASSEKAEKGLSSVPEIAEVEPSKKVEQGLDFAVQGQLDVKISDFGQMASGLNIDDRRATELKLEATQDMTPSSKAPQEADAFMGVESGHMKEGTKVSETEVKEKVAKPDLVHQEAVDKEESYESSGEHESLTMESLKADEGKKETSPESSLIQDEIAVKLSVEIPCPPAVSEADLATDERADVQMEFIQGPKEESKETPDISITPSDVAEPLHETIVSEPAEIQSEEEEIEAQGEYDKLLFRSDTLQITDLGVSGAREEFVETCPSEHKGVIESVVTIEDDFITVVQTTTDEGESGSHSVRFAALEQPEVERRPSPHDEEEFEVEEAAEAQAEPKDGSPEAPASPEREEVALSEYKTETYDDYKDETTIDDSIMDADSLWVDTQDDDRSIMTEQLETIPKEEKAEKEARRSSLEKHRKEKPFKTGRGRISTPERKVAKKEPSTVSRDEVRRKKAVYKKAELAKKTEVQAHSPSRKFILKPAIKYTRPTHLSCVKRKTTAAGGESALAPSVFKQAKDKVSDGVTKSPEKRSSLPRPSSILPPRRGVSGDRDENSFSLNSSISSSARRTTRSEPIRRAGKSGTSTPTTPGSTAITPGTPPSYSSRTPGTPGTPSYPRTPHTPGTPKSAILVPSEKKVAIIRTPPKSPATPKQLRLINQPLPDLKNVKSKIGSTDNIKYQPKGGQVQIVTKKIDLSHVTSKCGSLKNIRHRPGGGRVKIESVKLDFKEKAQAKVGSLDNAHHVPGGGNVKIDSQKLNFREHAKARVDHGAEIITQSPGRSSVASPRRLSNVSSSGSINLLESPQLATLAEDVTAALAKQGL.

Over residues 1–11 (MADERKDEAKA) the composition is skewed to basic and acidic residues. Disordered stretches follow at residues 1-88 (MADE…ETAE) and 109-221 (EQEK…EEKA). Over residues 63-73 (SQGTYSNTKEN) the composition is skewed to polar residues. Phosphotyrosine is present on tyrosine 67. Residues 109–119 (EQEKEAQHKDQ) show a composition bias toward basic and acidic residues. Over residues 120–133 (TAALPLAAEETANL) the composition is skewed to low complexity. A phosphoserine mark is found at serine 136, serine 140, and serine 143. 2 stretches are compositionally biased toward basic and acidic residues: residues 175–194 (SDQK…DLKH) and 207–221 (YPDK…EEKA). 3 positions are modified to phosphoserine: serine 285, threonine 323, and glutamine 354. Residues 340–497 (FAPAFLQPDD…EPTTDMLKQD (158 aa)) are disordered. Basic and acidic residues predominate over residues 364 to 380 (DSFKIEEPHEAKPDKMA). A Phosphoserine modification is found at glutamate 386. A compositionally biased stretch (basic and acidic residues) spans 392–415 (KDAHIPVVEEHVMGKVLEEEKEAI). Residues 416–430 (NQETVQQRDTFTPSG) show a composition bias toward polar residues. Positions 435–467 (LTEKETELKLEEKTTISDKEAVPKESKPPKPAD) are enriched in basic and acidic residues. Residues serine 498, serine 601, serine 605, serine 610, serine 629, serine 725, and serine 729 each carry the phosphoserine modification. The tract at residues 579 to 660 (KEEATKSIEP…EPSSPQERMF (82 aa)) is disordered. Positions 596-606 (SDTRESVHESI) are enriched in basic and acidic residues. Positions 701-744 (SINLPMSCLDSIALGFNFGRGHDLSPLASDILTNTSGSMDEGDD) are interaction with KNDC1. Threonine 733 carries the phosphothreonine modification. A phosphoserine mark is found at serine 736 and serine 738. Tyrosine 745 is modified (phosphotyrosine). A phosphoserine mark is found at serine 821, serine 881, serine 890, and serine 936. Disordered regions lie at residues 931 to 988 (VDKE…DEIE), 1073 to 1160 (EATQ…ESSL), 1197 to 1216 (IQGP…TPSD), 1297 to 1378 (TTTD…ETTI), 1403 to 1460 (QLET…EVRR), 1471 to 1490 (AKKT…LKPA), and 1506 to 1638 (TTAA…AILV). Composition is skewed to basic and acidic residues over residues 945 to 982 (GLSK…KTEE) and 1097 to 1155 (GHMK…KETS). 3 positions are modified to phosphoserine: serine 1133, serine 1134, and serine 1139. Threonine 1154 is subject to Phosphothreonine. Serine 1155 and serine 1159 each carry phosphoserine. A compositionally biased stretch (acidic residues) spans 1327–1337 (DEEEFEVEEAA). Serine 1347 and serine 1353 each carry phosphoserine. Composition is skewed to basic and acidic residues over residues 1354-1376 (PERE…KDET) and 1407-1425 (IPKE…LEKH). Residues 1426 to 1435 (RKEKPFKTGR) are compositionally biased toward basic residues. Residues 1440–1459 (TPERKVAKKEPSTVSRDEVR) show a composition bias toward basic and acidic residues. Residues 1447–1467 (KKEPSTVSRDEVRRKKAVYKK) are calmodulin-binding. Basic and acidic residues predominate over residues 1522–1539 (QAKDKVSDGVTKSPEKRS). Position 1534 is a phosphoserine (serine 1534). A compositionally biased stretch (low complexity) spans 1541-1552 (LPRPSSILPPRR). Serine 1555 carries the post-translational modification Phosphoserine. Low complexity-rich tracts occupy residues 1562-1574 (SFSL…SSAR) and 1587-1603 (KSGT…AITP). Serine 1588 is subject to Phosphoserine. Phosphothreonine is present on residues threonine 1602, threonine 1605, threonine 1616, threonine 1619, and threonine 1649. Positions 1609 to 1619 (YSSRTPGTPGT) are enriched in polar residues. Residue serine 1653 is modified to Phosphoserine. Tau/MAP repeat units lie at residues 1661 to 1691 (RLIN…KGGQ), 1692 to 1722 (VQIV…GGGR), and 1723 to 1754 (VKIE…GGGN). Phosphoserine; by MARK1 is present on serine 1679. Positions 1779-1801 (ITQSPGRSSVASPRRLSNVSSSG) are disordered. Serine 1782, serine 1787, serine 1790, serine 1795, and serine 1808 each carry phosphoserine.

Interacts with KNDC1 (via KIND2); the interaction enhances MAP2 phosphorylation and localizes KNDC1 to dendrites. Interacts with DPYSL5. In terms of processing, phosphorylated at serine residues in K-X-G-S motifs by MAP/microtubule affinity-regulating kinase (MARK1 or MARK2), causing detachment from microtubules, and their disassembly. Isoform 2 is probably phosphorylated by PKA at Ser-323, Ser-354 and Ser-386 and by FYN at Tyr-67. The interaction with KNDC1 enhances MAP2 threonine phosphorylation.

It localises to the cytoplasm. Its subcellular location is the cytoskeleton. The protein resides in the cell projection. The protein localises to the dendrite. Functionally, the exact function of MAP2 is unknown but MAPs may stabilize the microtubules against depolymerization. They also seem to have a stiffening effect on microtubules. This is Microtubule-associated protein 2 (MAP2) from Homo sapiens (Human).